The following is a 209-amino-acid chain: Imidazole glycerol phosphate synthase subunit HisH (209 aa).

Residues 1-205 enclose the Glutamine amidotransferase type-1 domain; sequence MIAIIDYGMG…KGVVEAWKSS (205 aa). The active-site Nucleophile is the Cys-79. Catalysis depends on residues His-180 and Glu-182.

Heterodimer of HisH and HisF.

It is found in the cytoplasm. The enzyme catalyses 5-[(5-phospho-1-deoxy-D-ribulos-1-ylimino)methylamino]-1-(5-phospho-beta-D-ribosyl)imidazole-4-carboxamide + L-glutamine = D-erythro-1-(imidazol-4-yl)glycerol 3-phosphate + 5-amino-1-(5-phospho-beta-D-ribosyl)imidazole-4-carboxamide + L-glutamate + H(+). It catalyses the reaction L-glutamine + H2O = L-glutamate + NH4(+). Its pathway is amino-acid biosynthesis; L-histidine biosynthesis; L-histidine from 5-phospho-alpha-D-ribose 1-diphosphate: step 5/9. Its function is as follows. IGPS catalyzes the conversion of PRFAR and glutamine to IGP, AICAR and glutamate. The HisH subunit catalyzes the hydrolysis of glutamine to glutamate and ammonia as part of the synthesis of IGP and AICAR. The resulting ammonia molecule is channeled to the active site of HisF. The chain is Imidazole glycerol phosphate synthase subunit HisH from Bacillus mycoides (strain KBAB4) (Bacillus weihenstephanensis).